Reading from the N-terminus, the 251-residue chain is Hydroxyacylglutathione hydrolase (251 aa).

Zn(2+) is bound by residues histidine 53, histidine 55, aspartate 57, histidine 58, histidine 109, aspartate 126, and histidine 164.

The protein belongs to the metallo-beta-lactamase superfamily. Glyoxalase II family. In terms of assembly, monomer. The cofactor is Zn(2+).

It carries out the reaction an S-(2-hydroxyacyl)glutathione + H2O = a 2-hydroxy carboxylate + glutathione + H(+). It participates in secondary metabolite metabolism; methylglyoxal degradation; (R)-lactate from methylglyoxal: step 2/2. Thiolesterase that catalyzes the hydrolysis of S-D-lactoyl-glutathione to form glutathione and D-lactic acid. In Wigglesworthia glossinidia brevipalpis, this protein is Hydroxyacylglutathione hydrolase.